The following is a 213-amino-acid chain: Neuromodulin (213 aa).

Residues 1 to 213 (MLCCIRRTKP…AEEAGKDQNV (213 aa)) are disordered. S-palmitoyl cysteine attachment occurs at residues cysteine 3 and cysteine 4. Residues 9–33 (KPVEKNEEADQEIKQDGTKPEENAH) show a composition bias toward basic and acidic residues. Residues 32-61 (AHKAATKIQASFRGHITRKKMKDEDKDGEN) enclose the IQ domain. Positions 57-73 (KDGENDTAPDESAETEE) are enriched in acidic residues. Over residues 74–86 (KEERVSPSEEKPV) the composition is skewed to basic and acidic residues. Low complexity predominate over residues 102–122 (PNSPAAEAPPTAATDSAPSDT). Over residues 157–169 (EKEEEEEEEEEEE) the composition is skewed to acidic residues. The segment covering 191–213 (QTDKKEALDDSKPAEEAGKDQNV) has biased composition (basic and acidic residues).

It belongs to the neuromodulin family. In terms of assembly, binds calmodulin with a greater affinity in the absence of Ca(2+) than in its presence. In terms of processing, palmitoylated. Palmitoylation is essential for plasma membrane association.

The protein localises to the cell membrane. It localises to the cell projection. Its subcellular location is the growth cone membrane. It is found in the synapse. The protein resides in the filopodium membrane. Its function is as follows. This protein is associated with nerve growth. It is a major component of the motile 'growth cones' that form the tips of elongating axons. Plays a role in axonal and dendritic filopodia induction. In Carassius auratus (Goldfish), this protein is Neuromodulin (gap43).